The sequence spans 224 residues: Leucyl/phenylalanyl-tRNA--protein transferase (224 aa).

Belongs to the L/F-transferase family.

The protein resides in the cytoplasm. The catalysed reaction is N-terminal L-lysyl-[protein] + L-leucyl-tRNA(Leu) = N-terminal L-leucyl-L-lysyl-[protein] + tRNA(Leu) + H(+). The enzyme catalyses N-terminal L-arginyl-[protein] + L-leucyl-tRNA(Leu) = N-terminal L-leucyl-L-arginyl-[protein] + tRNA(Leu) + H(+). It catalyses the reaction L-phenylalanyl-tRNA(Phe) + an N-terminal L-alpha-aminoacyl-[protein] = an N-terminal L-phenylalanyl-L-alpha-aminoacyl-[protein] + tRNA(Phe). Its function is as follows. Functions in the N-end rule pathway of protein degradation where it conjugates Leu, Phe and, less efficiently, Met from aminoacyl-tRNAs to the N-termini of proteins containing an N-terminal arginine or lysine. This Rhodopseudomonas palustris (strain HaA2) protein is Leucyl/phenylalanyl-tRNA--protein transferase.